The sequence spans 379 residues: Transcription factor TIP2 (379 aa).

The disordered stretch occupies residues 144–184 (MVGPFESSPTPRSGGGRKRSRATAGFHGGGPANGVEKKEKQ). Positions 173–186 (GPANGVEKKEKQRR) are basic motif; degenerate. The 50-residue stretch at 173 to 222 (GPANGVEKKEKQRRLRLTEKYNALMLLIPNRTKEDRATVISDAIEYIQEL) folds into the bHLH domain. Residues 187–222 (LRLTEKYNALMLLIPNRTKEDRATVISDAIEYIQEL) form a helix-loop-helix motif region.

Belongs to the bHLH protein family. Homodimer. Interacts with TDR, but not with EAT1. Highly expressed in anthers; strong expression in the middle layer and tapetum, and weak expression in the endothecium.

It localises to the nucleus. Transcription factor that binds to the E-box-containing promoter regions of the transcription factors TDR and EAT1, activating their expression. May have a role in specifying the cell pattern of the inner anther walls and functioning in meiosis progression. Required for male reproduction. Acts downstream of UDT1 and GAMYB, but upstream of TDR1 and EAT1 in pollen development. The sequence is that of Transcription factor TIP2 (TIP2) from Oryza sativa subsp. japonica (Rice).